Consider the following 1877-residue polypeptide: Phosphatidylinositol 4-kinase stt4 (1877 aa).

The PIK helical domain occupies 1305-1491 (PDSDAASSPI…KPILDRVMDK (187 aa)). The interval 1492–1625 (MINSLSGEDK…EVWQSAIFKV (134 aa)) is pleckstrin homology (PH) domain conferring phosphoinositide binding specificity. The region spanning 1593-1861 (DPEELAVNGT…LIEQSYANKR (269 aa)) is the PI3K/PI4K catalytic domain. The interval 1599-1605 (VNGTEEE) is G-loop. The catalytic loop stretch occupies residues 1728–1736 (QFKDRHNGN). Residues 1747-1771 (HIDFGFIFDIAPGGITFESAPFKLT) are activation loop.

This sequence belongs to the PI3/PI4-kinase family. Type III PI4K subfamily.

The protein localises to the cytoplasm. It carries out the reaction a 1,2-diacyl-sn-glycero-3-phospho-(1D-myo-inositol) + ATP = a 1,2-diacyl-sn-glycero-3-phospho-(1D-myo-inositol 4-phosphate) + ADP + H(+). Functionally, acts on phosphatidylinositol (PI) in the first committed step in the production of the second messenger inositol 1,4,5,-trisphosphate. This chain is Phosphatidylinositol 4-kinase stt4 (stt4), found in Schizosaccharomyces pombe (strain 972 / ATCC 24843) (Fission yeast).